We begin with the raw amino-acid sequence, 158 residues long: MIELKSGLLVSKIRNGTVIDHIPAGRALAVLKILGIKGIEGYRIALVMNAESSKMGRKDILKIEDREIEEKEAELITLIAPEATINIIKDYEVVGKRKQEIPQEVVGLLRCTNPSCITNNDVEAITRFRTLKRRPLQLACEYCETRLTEDEVVRQILG.

Residues Cys-111, Cys-116, Cys-140, and Cys-143 each coordinate Zn(2+).

It belongs to the PyrI family. As to quaternary structure, contains catalytic and regulatory chains. Zn(2+) serves as cofactor.

Its function is as follows. Involved in allosteric regulation of aspartate carbamoyltransferase. This Metallosphaera sedula (strain ATCC 51363 / DSM 5348 / JCM 9185 / NBRC 15509 / TH2) protein is Aspartate carbamoyltransferase regulatory chain.